Here is a 191-residue protein sequence, read N- to C-terminus: Large ribosomal subunit protein uL6 (191 aa).

It belongs to the universal ribosomal protein uL6 family. Part of the 50S ribosomal subunit.

Its function is as follows. This protein binds to the 23S rRNA, and is important in its secondary structure. It is located near the subunit interface in the base of the L7/L12 stalk, and near the tRNA binding site of the peptidyltransferase center. The sequence is that of Large ribosomal subunit protein uL6 from Cyanothece sp. (strain PCC 7425 / ATCC 29141).